Consider the following 89-residue polypeptide: Small ribosomal subunit protein uS19 (89 aa).

It belongs to the universal ribosomal protein uS19 family.

Protein S19 forms a complex with S13 that binds strongly to the 16S ribosomal RNA. This Phocaeicola vulgatus (strain ATCC 8482 / DSM 1447 / JCM 5826 / CCUG 4940 / NBRC 14291 / NCTC 11154) (Bacteroides vulgatus) protein is Small ribosomal subunit protein uS19.